Reading from the N-terminus, the 298-residue chain is Tyrosine recombinase XerC (298 aa).

One can recognise a Core-binding (CB) domain in the interval 1-85; it reads MQQQLDAYCA…AVRGLYHYLN (85 aa). A Tyr recombinase domain is found at 106 to 285; sequence RLPKTLDTDR…DFQHLAAVYD (180 aa). Active-site residues include Arg-146, Lys-170, His-237, Arg-240, and His-263. Tyr-272 functions as the O-(3'-phospho-DNA)-tyrosine intermediate in the catalytic mechanism.

It belongs to the 'phage' integrase family. XerC subfamily. Forms a cyclic heterotetrameric complex composed of two molecules of XerC and two molecules of XerD.

The protein resides in the cytoplasm. Functionally, site-specific tyrosine recombinase, which acts by catalyzing the cutting and rejoining of the recombining DNA molecules. The XerC-XerD complex is essential to convert dimers of the bacterial chromosome into monomers to permit their segregation at cell division. It also contributes to the segregational stability of plasmids. The protein is Tyrosine recombinase XerC of Pseudomonas fluorescens (strain ATCC BAA-477 / NRRL B-23932 / Pf-5).